Here is a 1432-residue protein sequence, read N- to C-terminus: MDDGNENNENAQHDEYDEEEIEIPIDEIIIEEVDDDHLLEGEGEFQIITQPSNNNNNSNNNNFGDIYVSNPNTPRNNNNNNNNNNNNNNNNNNNNNNNSNNSFNNNKKNEVSIGISENTNENNNKNNNNNNNNNDDYNDGADERVKTEEEIKKEAENELNQSVPFLSLFRFADNTDKVLMFLGTIAAVINGAAMPTVSLVFGLVVDAFKPTQFNDDPNYDIYDTVRSISFYLLMLGGGVFVLSYLETTLWMIAGERQTSRIRREYLESTLRQEIGWFDTNKANELSSRINSDTVLFEEAIGEKVGRFIHFFSTFVAGFVIGFTKGWQLTLVITSVSPLLAIGGFFTAKMMTQMTKLGQEAYSRAGGVAEENIGSIRTVATFSGEKLAIDKYSNNLKDARTVGYKRSFFNGLGLGFVQFVILGTYALAFWYGSTLISNKVTNSVSDRPWTGGDVVSVFFAVIIGATSIGQASPCLALFAQGRGAAYKIFQVIDRQSKANPFSTRGIKPETLSGEIEFKDVGFHYPSRPDVPIFNGFNLKIKPGQTVGLVGDSGGGKSTIISLLERFYDPCQGEILLDGEDIRKFNVRGLRQKIGLVNQEPVLFATTISENIRYGKEGATQDEIEEAAKLANAHSFISQLPQGYNTLVGEKGVQMSGGQRQRIAIARAVIKNPNILLLDESTSALDAESTKLVQEALDVLMKGRTTIVIAHNLSTIRNADVIIYIKKGVAVERGTHDELMAKQGLYFDLVEKQSHQQMYNLLENGTRSRRSSTFSAEVNPLLDSFHVSKRSLRKNESESNKKDKEDSNNKKKKKSNKKKVEEVPMSRVVKYNRPELGLWCFGFLSAVGTGAVYPGFAMVFTEMLTIFQNPDPNYLTDHANFVALMFVALAVGAGISNFFQGFLFSVIGEKLTYRLRRDCFAAIMRQDVGWFDLPENSTGKLTSHLATDAALVQGMTSQRLGIVLQNILTMVGGLVIAFYSGWQLTLVIIACFPLVVITSKVQMQILAGFSSKDGCGPAGQVASEAISGIRTVASFTTEKQVVELYKKQQKGPSSEGIKKAHISGFAFGFTQLILFCVYCLSFWYGGKLVGSGVFGATDKEISDNCTPQTIPYLWKDYDTCERAQNTIYGFNSMTRVFFAIVMSAIGVGQASSFAPDLAKAKAAAVSVFKLLDTPSKIDPTTEDGDRIDIVGGDIEFKNLHFSYPTRPDNSVFRGFTLTLQSGTTTALVGDSGGGKSTCLSLLQRFYNPVVGEIFIDGHNIKNLNVRHLRHLFGLVGQEPTLFSGTIADNIRYGKHDATQEEIEEASKLSNSHSFIIDLPNGYNTELGEKYTQLSGGQKQRIAIARAIIRNPKILLLDESTSALDADSTKLVQEALENVMKGRTTIVIAHNLLTIQNADCIAYVRAGQIIERGTHDELLEAEGPYSQLWYNQQQK.

Disordered regions lie at residues 1 to 21 (MDDG…EEEI) and 48 to 149 (ITQP…KTEE). Composition is skewed to low complexity over residues 52 to 62 (SNNNNNSNNNN), 76 to 106 (NNNN…FNNN), and 118 to 135 (NTNE…NNND). A coiled-coil region spans residues 117 to 163 (ENTNENNNKNNNNNNNNNDDYNDGADERVKTEEEIKKEAENELNQSV). Positions 180–479 (MFLGTIAAVI…ASPCLALFAQ (300 aa)) constitute an ABC transmembrane type-1 1 domain. The next 6 helical transmembrane spans lie at 185 to 205 (IAAV…GLVV), 232 to 252 (LLML…LWMI), 303 to 323 (KVGR…IGFT), 325 to 345 (GWQL…GGFF), 410 to 430 (GLGL…AFWY), and 457 to 477 (FFAV…LALF). Residues 514–750 (IEFKDVGFHY…QGLYFDLVEK (237 aa)) enclose the ABC transporter 1 domain. Residue 549–556 (GDSGGGKS) participates in ATP binding. The tract at residues 787-819 (KRSLRKNESESNKKDKEDSNNKKKKKSNKKKVE) is disordered. Positions 791-807 (RKNESESNKKDKEDSNN) are enriched in basic and acidic residues. Positions 837–1157 (WCFGFLSAVG…ASSFAPDLAK (321 aa)) constitute an ABC transmembrane type-1 2 domain. A run of 6 helical transmembrane segments spans residues 838–858 (CFGF…AMVF), 882–902 (LMFV…GFLF), 968–988 (MVGG…VIIA), 989–1009 (CFPL…GFSS), 1060–1080 (ISGF…CLSF), and 1134–1154 (VFFA…FAPD). In terms of domain architecture, ABC transporter 2 spans 1192 to 1428 (IEFKNLHFSY…EGPYSQLWYN (237 aa)). ATP is bound at residue 1227 to 1234 (GDSGGGKS).

Belongs to the ABC transporter superfamily. ABCB family. Multidrug resistance exporter (TC 3.A.1.201) subfamily.

It is found in the membrane. This Dictyostelium discoideum (Social amoeba) protein is ABC transporter B family member 3 (abcB3).